Reading from the N-terminus, the 714-residue chain is Hormonally up-regulated neu tumor-associated kinase (714 aa).

The segment covering 1 to 15 (MPAAAGDGLLGEPAA) has biased composition (low complexity). Residues 1–26 (MPAAAGDGLLGEPAAPGGGGGAEDAA) are disordered. Positions 62 to 320 (LIGSRKLGEG…IQQALANRWL (259 aa)) constitute a Protein kinase domain. ATP contacts are provided by residues 68 to 76 (LGEGSFAKV) and Lys-91. Asp-186 functions as the Proton acceptor in the catalytic mechanism. Over residues 437–461 (KKPKEQEKRGDFLHRPFSKKLDKNL) the composition is skewed to basic and acidic residues. Disordered stretches follow at residues 437-471 (KKPK…SGSL), 518-552 (MEFI…HKED), and 590-660 (ARRN…VKSR). The segment covering 599–611 (LSPGLPSGSMSPL) has biased composition (low complexity). A compositionally biased stretch (basic and acidic residues) spans 623 to 635 (AHEDKNSPPKEEG).

The protein belongs to the protein kinase superfamily. CAMK Ser/Thr protein kinase family. SNF1 subfamily.

The catalysed reaction is L-seryl-[protein] + ATP = O-phospho-L-seryl-[protein] + ADP + H(+). It carries out the reaction L-threonyl-[protein] + ATP = O-phospho-L-threonyl-[protein] + ADP + H(+). This is Hormonally up-regulated neu tumor-associated kinase (HUNK) from Pan troglodytes (Chimpanzee).